The sequence spans 553 residues: MKLGSSRAGPGRGSAGLLPGVHELPMGIPAPWGTSPLSFHRKCSLWAPGRPFLTLVLLVSIKQVTGSLLEETTRKWAQYKQACLRDLLKEPSGIFCNGTFDQYVCWPHSSPGNVSVPCPSYLPWWSEESSGRAYRHCLAQGTWQTIENATDIWQDDSECSENHSFKQNVDRYALLSTLQLMYTVGYSFSLISLFLALTLLLFLRKLHCTRNYIHMNLFASFILRTLAVLVKDVVFYNSYSKRPDNENGWMSYLSEMSTSCRSVQVLLHYFVGANYLWLLVEGLYLHTLLEPTVLPERRLWPRYLLLGWAFPVLFVVPWGFARAHLENTGCWTTNGNKKIWWIIRGPMMLCVTVNFFIFLKILKLLISKLKAHQMCFRDYKYRLAKSTLVLIPLLGVHEILFSFITDDQVEGFAKLIRLFIQLTLSSFHGFLVALQYGFANGEVKAELRKYWVRFLLARHSGCRACVLGKDFRFLGKCPKKLSEGDGAEKLRKLQPSLNSGRLLHLAMRGLGELGAQPQQDHARWPRGSSLSECSEGDVTMANTMEEILEESEI.

Topologically, residues 1-173 (MKLGSSRAGP…SFKQNVDRYA (173 aa)) are extracellular. Cystine bridges form between Cys83–Cys105, Cys96–Cys137, and Cys118–Cys159. N-linked (GlcNAc...) asparagine glycosylation is found at Asn97, Asn113, Asn148, and Asn162. The chain crosses the membrane as a helical span at residues 174–198 (LLSTLQLMYTVGYSFSLISLFLALT). Topologically, residues 199-210 (LLLFLRKLHCTR) are cytoplasmic. Residues 211–235 (NYIHMNLFASFILRTLAVLVKDVVF) form a helical membrane-spanning segment. Residues 236-261 (YNSYSKRPDNENGWMSYLSEMSTSCR) lie on the Extracellular side of the membrane. Residues 262–285 (SVQVLLHYFVGANYLWLLVEGLYL) traverse the membrane as a helical segment. Residues 286 to 299 (HTLLEPTVLPERRL) lie on the Cytoplasmic side of the membrane. The chain crosses the membrane as a helical span at residues 300 to 321 (WPRYLLLGWAFPVLFVVPWGFA). The Extracellular segment spans residues 322–339 (RAHLENTGCWTTNGNKKI). The chain crosses the membrane as a helical span at residues 340 to 362 (WWIIRGPMMLCVTVNFFIFLKIL). The Cytoplasmic portion of the chain corresponds to 363 to 386 (KLLISKLKAHQMCFRDYKYRLAKS). Residues 387-405 (TLVLIPLLGVHEILFSFIT) form a helical membrane-spanning segment. Topologically, residues 406–417 (DDQVEGFAKLIR) are extracellular. Residues 418-438 (LFIQLTLSSFHGFLVALQYGF) form a helical membrane-spanning segment. The Cytoplasmic segment spans residues 439 to 550 (ANGEVKAELR…ANTMEEILEE (112 aa)).

The protein belongs to the G-protein coupled receptor 2 family.

The protein resides in the cell membrane. Functionally, this is a receptor for glucagon-like peptide 2. The activity of this receptor is mediated by G proteins which activate adenylyl cyclase. This chain is Glucagon-like peptide 2 receptor (GLP2R), found in Homo sapiens (Human).